Here is a 127-residue protein sequence, read N- to C-terminus: UPF0389 protein GA21628 (127 aa).

The chain crosses the membrane as a helical span at residues 69–88 (IRLANIMIALTVIGCGIMVY).

This sequence belongs to the UPF0389 family.

The protein resides in the membrane. The chain is UPF0389 protein GA21628 from Drosophila pseudoobscura pseudoobscura (Fruit fly).